The primary structure comprises 382 residues: Small ribosomal subunit protein bS1 homolog (382 aa).

S1 motif domains lie at 18–85, 103–168, 189–257, and 274–343; these read GDVV…LSKR, GHVF…LSHK, GDVV…LSIK, and GDIR…LSIK. Ser244 carries the phosphoserine modification.

It belongs to the bacterial ribosomal protein bS1 family.

The chain is Small ribosomal subunit protein bS1 homolog from Bacillus cereus (strain ATCC 10987 / NRS 248).